A 448-amino-acid polypeptide reads, in one-letter code: MREIVHIQAGQCGNQIGSKFWEVISDEHGVDPTGSYHGDSDLQLERINVYYSEASGGKYVPRCVLVDLEPGTMDSVRAGPFGQLFRPDNFVFGQSGAGNNWAKGHYTEGAELVESVLDVIRKECESCDCLQGFQMCHSLGGGTGSGMGTLLISKMREEFPDRIMNTFSVMPSPKVSDTVVEPYNATLSIHQLVENTDETFCIDNEALYDICFRTLKLTNPTYGDLNHLVSATMSGVTTCLRFPGQLNADLRKLAVNMVPFPRLHFFMPGFAPLTSRGSQQYRVLTVAELTQQMFDAKNMMAACDPRHGRYLTVAAMFRGRMSMKEVDDQMLNAQNKNSSYFVEWIPNNVKTAVCDIPPRGLKMSVTFMGNTTAIQEIFKRVSEQFTVMFRRKAFLHWYTGEGMDEMEFTEAESNMNDLVSEYQQYQEAGIGDDEEEDEEGVMGEEIDA.

The GTP site is built by Gln-11, Glu-69, Ser-138, Gly-142, Thr-143, Gly-144, Asn-204, and Asn-226. Residue Glu-69 coordinates Mg(2+). Positions 428–448 are disordered; it reads AGIGDDEEEDEEGVMGEEIDA. Residues 430 to 448 show a composition bias toward acidic residues; the sequence is IGDDEEEDEEGVMGEEIDA.

It belongs to the tubulin family. As to quaternary structure, dimer of alpha and beta chains. A typical microtubule is a hollow water-filled tube with an outer diameter of 25 nm and an inner diameter of 15 nM. Alpha-beta heterodimers associate head-to-tail to form protofilaments running lengthwise along the microtubule wall with the beta-tubulin subunit facing the microtubule plus end conferring a structural polarity. Microtubules usually have 13 protofilaments but different protofilament numbers can be found in some organisms and specialized cells. Mg(2+) is required as a cofactor.

It is found in the cytoplasm. Its subcellular location is the cytoskeleton. In terms of biological role, tubulin is the major constituent of microtubules, a cylinder consisting of laterally associated linear protofilaments composed of alpha- and beta-tubulin heterodimers. Microtubules grow by the addition of GTP-tubulin dimers to the microtubule end, where a stabilizing cap forms. Below the cap, tubulin dimers are in GDP-bound state, owing to GTPase activity of alpha-tubulin. The chain is Tubulin beta-1 chain (TUB-1) from Echinococcus multilocularis (Fox tapeworm).